We begin with the raw amino-acid sequence, 624 residues long: Glutamine--fructose-6-phosphate aminotransferase [isomerizing] (624 aa).

The active-site Nucleophile; for GATase activity is the C2. Positions 2–225 constitute a Glutamine amidotransferase type-2 domain; it reads CGIVGYVGRR…QDQAVVITAD (224 aa). SIS domains lie at 297–436 and 469–614; these read SDQE…ARGT and LAHR…VDKP. K619 (for Fru-6P isomerization activity) is an active-site residue.

Homodimer.

The protein localises to the cytoplasm. It carries out the reaction D-fructose 6-phosphate + L-glutamine = D-glucosamine 6-phosphate + L-glutamate. Its function is as follows. Catalyzes the first step in hexosamine metabolism, converting fructose-6P into glucosamine-6P using glutamine as a nitrogen source. The protein is Glutamine--fructose-6-phosphate aminotransferase [isomerizing] of Mycobacterium bovis (strain ATCC BAA-935 / AF2122/97).